A 201-amino-acid chain; its full sequence is Inner membrane protein YnbA (201 aa).

Topologically, residues 1 to 43 (MTLYQIKPLFQSLLRPTMFWLYKHHVTANHITLAALALSLLTG) are periplasmic. A helical membrane pass occupies residues 44 to 64 (LLLMLAAQPILFLLLPIVLFI). The Cytoplasmic portion of the chain corresponds to 65 to 84 (RMALNALDGMLARECNQQTR). A helical transmembrane segment spans residues 85–107 (LGAILNETGDVISDIALYLPFLF). Topologically, residues 108–116 (LPESNASLV) are periplasmic. The chain crosses the membrane as a helical span at residues 117–139 (ILMLFCTILTEFCGLLAQTINGV). At 140–151 (RSYAGPFGKSDR) the chain is on the cytoplasmic side. The chain crosses the membrane as a helical span at residues 152 to 172 (ALIFGLWGLAVAIYPQWMQWN). At 173–175 (NLL) the chain is on the periplasmic side. A helical transmembrane segment spans residues 176–196 (WSIASILLLWTAINRCRSVLL). Topologically, residues 197-201 (MSAEI) are cytoplasmic.

Its subcellular location is the cell inner membrane. This is Inner membrane protein YnbA (ynbA) from Escherichia coli (strain K12).